Here is a 684-residue protein sequence, read N- to C-terminus: Pseudohemocyanin-1 (684 aa).

An N-terminal signal peptide occupies residues 1–23; sequence SLVVAAAAASPYSGSHDFSGFQR. Residues 7-32 form a disordered region; it reads AAASPYSGSHDFSGFQRDEPDGVPTA. Residues N100, N193, N230, and N626 are each glycosylated (N-linked (GlcNAc...) asparagine).

Belongs to the tyrosinase family. Hemocyanin subfamily. As to quaternary structure, hexamer. As to expression, strongly expressed in ovaries. Also expressed in heart. Not detected in hepatopancreas, gills, connective tissue or muscle.

Its function is as follows. Does not function as a hemocyanin. This Homarus americanus (American lobster) protein is Pseudohemocyanin-1.